A 443-amino-acid polypeptide reads, in one-letter code: tRNA (guanine-N(7)-)-methyltransferase non-catalytic subunit TRM82 (443 aa).

The interval 67-93 (ASKKLKTNDGEPVAQPKKQAKVPKPGP) is disordered. WD repeat units follow at residues 97 to 137 (PVYQ…KDNI), 193 to 235 (GHVS…IVDK), and 239 to 279 (GHEE…LLFK).

It belongs to the WD repeat TRM82 family. Forms a heterodimer with the catalytic subunit TRM8.

The protein resides in the nucleus. The protein operates within tRNA modification; N(7)-methylguanine-tRNA biosynthesis. Functionally, required for the formation of N(7)-methylguanine at position 46 (m7G46) in tRNA. In the complex, it is required to stabilize and induce conformational changes of the catalytic subunit. The polypeptide is tRNA (guanine-N(7)-)-methyltransferase non-catalytic subunit TRM82 (Kluyveromyces lactis (strain ATCC 8585 / CBS 2359 / DSM 70799 / NBRC 1267 / NRRL Y-1140 / WM37) (Yeast)).